A 328-amino-acid chain; its full sequence is Ribosomal protein L11 methyltransferase (328 aa).

Residues threonine 158, glycine 180, aspartate 202, and asparagine 246 each coordinate S-adenosyl-L-methionine.

Belongs to the methyltransferase superfamily. PrmA family.

It localises to the cytoplasm. It catalyses the reaction L-lysyl-[protein] + 3 S-adenosyl-L-methionine = N(6),N(6),N(6)-trimethyl-L-lysyl-[protein] + 3 S-adenosyl-L-homocysteine + 3 H(+). Methylates ribosomal protein L11. The polypeptide is Ribosomal protein L11 methyltransferase (Polynucleobacter necessarius subsp. necessarius (strain STIR1)).